The sequence spans 157 residues: Transcriptional repressor NrdR (157 aa).

Residues Cys-3–Cys-34 fold into a zinc finger. Residues Leu-49 to Val-139 form the ATP-cone domain.

The protein belongs to the NrdR family. It depends on Zn(2+) as a cofactor.

Its function is as follows. Negatively regulates transcription of bacterial ribonucleotide reductase nrd genes and operons by binding to NrdR-boxes. In Latilactobacillus sakei subsp. sakei (strain 23K) (Lactobacillus sakei subsp. sakei), this protein is Transcriptional repressor NrdR.